We begin with the raw amino-acid sequence, 560 residues long: Hemocyanin, units G and H (560 aa).

A disulfide bond links Cys-1 and Cys-11. Positions 1–184 are unit G; sequence CPTPDAPQYA…AKGLVSQHIE (184 aa). A cross-link (2'-(S-cysteinyl)-histidine (Cys-His)) is located at residues 12-14; it reads CLH. Residues Cys-93 and Cys-98 are joined by a disulfide bond. Residue Asn-142 is glycosylated (N-linked (GlcNAc...) asparagine). Positions 185–560 are unit H; the sequence is DHDTETLIRK…KPGTGTQLTR (376 aa). A Cu cation-binding site is contributed by His-230. Cys-236 and Cys-246 are oxidised to a cystine. An N-linked (GlcNAc...) asparagine glycan is attached at Asn-240. Positions 247–249 form a cross-link, 2'-(S-cysteinyl)-histidine (Cys-His); it reads CQH. Residues His-249, His-258, His-358, His-362, and His-389 each coordinate Cu cation. Cystine bridges form between Cys-348–Cys-415 and Cys-476–Cys-482.

This sequence belongs to the tyrosinase family. Hemocyanin subfamily. In terms of assembly, decamers of large identical subunits (390 kDa), each containing 8 globular oxygen-binding functional units. The cofactor is Cu(2+).

Hemocyanins are copper-containing oxygen carriers occurring freely dissolved in the hemolymph of many mollusks and arthropods. This Sepia officinalis (Common cuttlefish) protein is Hemocyanin, units G and H.